A 394-amino-acid polypeptide reads, in one-letter code: Alanine--glyoxylate aminotransferase (394 aa).

Pyridoxal 5'-phosphate-binding positions include 76-78, serine 153, and glutamine 204; that span reads AGH. A substrate-binding site is contributed by serine 153. Position 205 is an N6-(pyridoxal phosphate)lysine (lysine 205). Pyridoxal 5'-phosphate-binding residues include tyrosine 256 and threonine 259. Arginine 356 is a binding site for substrate.

Belongs to the class-V pyridoxal-phosphate-dependent aminotransferase family. As to quaternary structure, homodimer. The cofactor is pyridoxal 5'-phosphate.

Its subcellular location is the peroxisome. It catalyses the reaction glyoxylate + L-alanine = glycine + pyruvate. The enzyme catalyses (2S)-2-aminobutanoate + glyoxylate = 2-oxobutanoate + glycine. The catalysed reaction is glyoxylate + L-phenylalanine = 3-phenylpyruvate + glycine. It carries out the reaction glyoxylate + L-serine = 3-hydroxypyruvate + glycine. It catalyses the reaction 2-oxobutanoate + L-alanine = (2S)-2-aminobutanoate + pyruvate. The enzyme catalyses L-phenylalanine + pyruvate = 3-phenylpyruvate + L-alanine. The catalysed reaction is L-serine + pyruvate = 3-hydroxypyruvate + L-alanine. Catalyzes the pyridoxal 5'-phosphate-dependent transamination of alanine with glyoxylate as an amino group acceptor. Can also catalyze, although with much less efficiency, the transamination of amino-butyrate, phenylalanine and serine with glyoxylate or pyruvate as an amino group acceptor. Does not catalyze the transamination of both 3-hydroxykynurenine and L-kynurenine. May play a role in the detoxification of glyoxylate, a toxic plant metabolite from the fly diet. The sequence is that of Alanine--glyoxylate aminotransferase from Drosophila melanogaster (Fruit fly).